The following is an 847-amino-acid chain: Endo-beta-N-acetylglucosaminidase EndoSd (847 aa).

Residues 1–36 form the signal peptide; sequence MDKRLLVKRTLGCVCAATLMGAILATHHDSLISVKA. The GH18 domain maps to 65–377; it reads PLYAGYFRTW…HPVVDNISHT (313 aa). His-107 contacts a glycoprotein. Glu-186 functions as the Proton donor in the catalytic mechanism. Residues Glu-188, Gln-250, Tyr-252, Glu-288, Glu-289, Asn-295, and Tyr-339 each contribute to the a glycoprotein site. LRR repeat units lie at residues 423–446, 447–470, 483–506, and 507–530; these read LERY…LEKL, SHLQ…ILPE, MTGL…DVNG, and LTHL…ADRK. A carbohydrate-binding module (CBM) region spans residues 683–836; that stretch reads MENLAKGAKV…YTELQILGQR (154 aa). Ca(2+)-binding residues include Lys-704, Asp-707, and Glu-829.

Belongs to the glycosyl hydrolase 18 family.

Its subcellular location is the secreted. It localises to the host extracellular space. The catalysed reaction is an N(4)-(oligosaccharide-(1-&gt;3)-[oligosaccharide-(1-&gt;6)]-beta-D-Man-(1-&gt;4)-beta-D-GlcNAc-(1-&gt;4)-alpha-D-GlcNAc)-L-asparaginyl-[protein] + H2O = an oligosaccharide-(1-&gt;3)-[oligosaccharide-(1-&gt;6)]-beta-D-Man-(1-&gt;4)-D-GlcNAc + N(4)-(N-acetyl-beta-D-glucosaminyl)-L-asparaginyl-[protein]. Functionally, endoglucosidase that acts as a host immune evasion factor by mediating hydrolysis of the N-linked glycan from the Fc region of host immunoglobulin-gamma (IgG) during infection. Specifically catalyzes the hydrolysis of the beta-1,4 linkage between the first two N-acetylglucosamine residues of the complex-type N-linked glycan located on 'Asn-297' of the Fc region of IgG antibodies (IGHG1, IGHG2, IGHG3 or IGHG4), thereby preventing interaction between IgGs and Fc receptors and ability to activate the complement pathway. Shows a specificity for biantennary complex type N-glycans; does neither cleave larger complex type glycans nor oligomannose and nor hybrid-type glycans. Specifically acts on IgGs; does not act on immunoglobulin alpha, beta, delta or mu. The chain is Endo-beta-N-acetylglucosaminidase EndoSd from Streptococcus dysgalactiae.